Consider the following 380-residue polypeptide: Kappa-type opioid receptor (380 aa).

At M1 to A57 the chain is on the extracellular side. N-linked (GlcNAc...) asparagine glycans are attached at residues N25 and N39. Residues I58–I85 traverse the membrane as a helical segment. Residues R86–N95 lie on the Cytoplasmic side of the membrane. The chain crosses the membrane as a helical span at residues I96–Y119. At L120–K132 the chain is on the extracellular side. C131 and C210 are joined by a disulfide. The helical transmembrane segment at I133–V154 threads the bilayer. Topologically, residues D155 to L173 are cytoplasmic. Residues K174 to L196 form a helical membrane-spanning segment. The Extracellular segment spans residues G197–W222. The helical transmembrane segment at D223–T247 threads the bilayer. The Cytoplasmic segment spans residues L248 to R274. Residues L275–V296 traverse the membrane as a helical segment. The Extracellular portion of the chain corresponds to E297–S311. The helical transmembrane segment at Y312–L333 threads the bilayer. Topologically, residues D334–V380 are cytoplasmic. Residue C345 is the site of S-palmitoyl cysteine attachment.

This sequence belongs to the G-protein coupled receptor 1 family. As to quaternary structure, interacts with NHERF1. Interacts with GABARAPL1. In terms of tissue distribution, detected in brain and placenta.

It is found in the cell membrane. G-protein coupled opioid receptor that functions as a receptor for endogenous alpha-neoendorphins and dynorphins, but has low affinity for beta-endorphins. Also functions as a receptor for various synthetic opioids and for the psychoactive diterpene salvinorin A. Ligand binding causes a conformation change that triggers signaling via guanine nucleotide-binding proteins (G proteins) and modulates the activity of down-stream effectors, such as adenylate cyclase. Signaling leads to the inhibition of adenylate cyclase activity. Inhibits neurotransmitter release by reducing calcium ion currents and increasing potassium ion conductance. Plays a role in the perception of pain. Plays a role in mediating reduced physical activity upon treatment with synthetic opioids. Plays a role in the regulation of salivation in response to synthetic opioids. May play a role in arousal and regulation of autonomic and neuroendocrine functions. The protein is Kappa-type opioid receptor (OPRK1) of Homo sapiens (Human).